A 101-amino-acid chain; its full sequence is MKQYKIKVLWLRNNIAIAVDRLIGDSLFPMTYYYFWPRTDAWEQLKIELDSQPGLFAKDKVVILNQVTRIIDYWQENKKSVFPNLSELQSHFPDLICSGCY.

It belongs to the chloroplast-specific ribosomal protein cS23 family. In terms of assembly, part of the 30S ribosomal subunit.

The protein localises to the plastid. It localises to the chloroplast. Functionally, probably a ribosomal protein or a ribosome-associated protein. The polypeptide is Small ribosomal subunit protein cS23 (ycf65) (Cyanidium caldarium (Red alga)).